A 254-amino-acid polypeptide reads, in one-letter code: Aspartate/glutamate leucyltransferase (254 aa).

The protein belongs to the R-transferase family. Bpt subfamily.

It is found in the cytoplasm. The catalysed reaction is N-terminal L-glutamyl-[protein] + L-leucyl-tRNA(Leu) = N-terminal L-leucyl-L-glutamyl-[protein] + tRNA(Leu) + H(+). It carries out the reaction N-terminal L-aspartyl-[protein] + L-leucyl-tRNA(Leu) = N-terminal L-leucyl-L-aspartyl-[protein] + tRNA(Leu) + H(+). Functions in the N-end rule pathway of protein degradation where it conjugates Leu from its aminoacyl-tRNA to the N-termini of proteins containing an N-terminal aspartate or glutamate. This is Aspartate/glutamate leucyltransferase from Xylella fastidiosa (strain M12).